Reading from the N-terminus, the 178-residue chain is Large ribosomal subunit protein uL6 (178 aa).

The protein belongs to the universal ribosomal protein uL6 family. In terms of assembly, part of the 50S ribosomal subunit.

Its function is as follows. This protein binds to the 23S rRNA, and is important in its secondary structure. It is located near the subunit interface in the base of the L7/L12 stalk, and near the tRNA binding site of the peptidyltransferase center. The polypeptide is Large ribosomal subunit protein uL6 (Exiguobacterium sibiricum (strain DSM 17290 / CCUG 55495 / CIP 109462 / JCM 13490 / 255-15)).